The sequence spans 145 residues: Brain and acute leukemia cytoplasmic protein (145 aa).

G2 is lipidated: N-myristoyl glycine. C3 carries S-palmitoyl cysteine lipidation. The interval 3–35 (CGGSRADAIEPRYYESWTRETESTWLTYTDSDA) is interaction with CAMK2A. Disordered regions lie at residues 36–56 (LPSAAATDSGPEAGGLHAGVL) and 87–109 (CPNSQNLSSGPLTQKQNGLWATE). Polar residues predominate over residues 87–105 (CPNSQNLSSGPLTQKQNGL).

Interacts with CAMK2A. Post-translationally, palmitoylation and myristoylation target the protein to the lipid rafts. As to expression, at the mRNA level, predominantly expressed in the brain. At the protein level, mainly expressed in muscle tissues. In skeletal muscles, expressed in cranial and facial muscles, muscles of the neck, back, thoracic wall, and thigh. Also found in the contractile myoepithelial cell layer of salivary glands. In smooth muscles, expressed in the gastric wall, uterus, urinary bladder, as well as in the muscular lining around seminiferous tubules, prostatic ducts, epididymis, vas deferens, walls of small blood vessels in the dermis, and fascial layers between muscle fibers, brain, and around the spinal cord. Strongly expressed in myocardium. High expression levels are observed in placental spongiotrophoblast and adjacent myometrium. Also expressed in bone marrow hematopoietic cells. In the mature thymus, expressed in rare scattered cells. Weakly expressed in the brain neuropil, particularly near the hippocampus, and spinal cord white matter. Not detected in skin keratinocytes or lung (at protein level).

It is found in the cytoplasm. It localises to the synapse. Its subcellular location is the synaptosome. The protein resides in the membrane raft. The protein localises to the postsynaptic density. May play a synaptic role at the postsynaptic lipid rafts possibly through interaction with CAMK2A. The polypeptide is Brain and acute leukemia cytoplasmic protein (Baalc) (Mus musculus (Mouse)).